Consider the following 267-residue polypeptide: Expansin-B10 (267 aa).

An N-terminal signal peptide occupies residues 1–22 (MASSCLLLACVVAAAMVSAVSC). Asparagine 32 is a glycosylation site (N-linked (GlcNAc...) asparagine). The Expansin-like EG45 domain occupies 61–167 (GGACGYKDID…RRVRCKYPGE (107 aa)). 3 disulfide bridges follow: cysteine 64/cysteine 92, cysteine 95/cysteine 162, and cysteine 100/cysteine 106. Positions 181-262 (NYFAVLVKYV…NWKANALYKS (82 aa)) constitute an Expansin-like CBD domain. N-linked (GlcNAc...) asparagine glycosylation is present at asparagine 213.

This sequence belongs to the expansin family. Expansin B subfamily.

The protein resides in the secreted. It localises to the cell wall. It is found in the membrane. Functionally, may cause loosening and extension of plant cell walls by disrupting non-covalent bonding between cellulose microfibrils and matrix glucans. No enzymatic activity has been found. May be required for rapid internodal elongation in deepwater rice during submergence. The polypeptide is Expansin-B10 (EXPB10) (Oryza sativa subsp. japonica (Rice)).